Reading from the N-terminus, the 139-residue chain is Class I hydrophobin 1 (139 aa).

A signal peptide spans methionine 1–proline 21. Cystine bridges form between cysteine 57-cysteine 118, cysteine 64-cysteine 112, cysteine 65-cysteine 98, and cysteine 119-cysteine 132.

The protein belongs to the fungal hydrophobin family. In terms of assembly, self-assembles to form functional amyloid fibrils called rodlets. Self-assembly into fibrillar rodlets occurs spontaneously at hydrophobic:hydrophilic interfaces and the rodlets further associate laterally to form amphipathic monolayers.

It localises to the secreted. The protein resides in the cell wall. Functionally, aerial growth, conidiation, and dispersal of filamentous fungi in the environment rely upon a capability of their secreting small amphipathic proteins called hydrophobins (HPBs) with low sequence identity. Class I can self-assemble into an outermost layer of rodlet bundles on aerial cell surfaces, conferring cellular hydrophobicity that supports fungal growth, development and dispersal; whereas Class II form highly ordered films at water-air interfaces through intermolecular interactions but contribute nothing to the rodlet structure. Hah1 is a class I hydrophobin that is involved in aerial growth of mycelia, but does not play a role in pathogenesis. The polypeptide is Class I hydrophobin 1 (Heterobasidion annosum (Root rot fungus)).